The sequence spans 509 residues: tRNA-2-methylthio-N(6)-dimethylallyladenosine synthase (509 aa).

Positions 1-15 (MNEQQRLASQQVNSS) are enriched in polar residues. Residues 1–26 (MNEQQRLASQQVNSSTKKEEKDYSKY) are disordered. The segment covering 16-25 (TKKEEKDYSK) has biased composition (basic and acidic residues). Residues 66 to 184 (RKFYIRTYGC…LPYILKDAMF (119 aa)) enclose the MTTase N-terminal domain. Positions 75, 111, 145, 221, 225, and 228 each coordinate [4Fe-4S] cluster. The 231-residue stretch at 207-437 (RRGDIKAWVN…NALVNKLAIE (231 aa)) folds into the Radical SAM core domain. The region spanning 440 to 503 (DRYKGQIVEV…TWSLNGELVE (64 aa)) is the TRAM domain.

It belongs to the methylthiotransferase family. MiaB subfamily. As to quaternary structure, monomer. [4Fe-4S] cluster is required as a cofactor.

The protein localises to the cytoplasm. It carries out the reaction N(6)-dimethylallyladenosine(37) in tRNA + (sulfur carrier)-SH + AH2 + 2 S-adenosyl-L-methionine = 2-methylsulfanyl-N(6)-dimethylallyladenosine(37) in tRNA + (sulfur carrier)-H + 5'-deoxyadenosine + L-methionine + A + S-adenosyl-L-homocysteine + 2 H(+). Catalyzes the methylthiolation of N6-(dimethylallyl)adenosine (i(6)A), leading to the formation of 2-methylthio-N6-(dimethylallyl)adenosine (ms(2)i(6)A) at position 37 in tRNAs that read codons beginning with uridine. This is tRNA-2-methylthio-N(6)-dimethylallyladenosine synthase from Bacillus thuringiensis (strain Al Hakam).